A 305-amino-acid chain; its full sequence is MDDKELIEYFKSQMKEDPDMASAVAAIRTLLEFLKRDKGETIQGLRANLTSAIETLCGVDSSVAVSSGGELFLRFISLASLEYSDYSKCKKIMIERGELFLRRISLSRNKIADLCHTFIKDGATILTHAYSRVVLRVLEAAVAAKKRFSVYVTESQPDLSGKKMAKALCHLNVPVTVVLDAAVGYIMEKADLVIVGAEGVVENGGIINKIGTNQMAVCAKAQNKPFYVVAESFKFVRLFPLNQQDVPDKFKYKADTLKVAQTGQDLKEEHPWVDYTAPSLITLLFTDLGVLTPSAVSDELIKLYL.

Position 35 is an N6-acetyllysine (K35).

This sequence belongs to the eIF-2B alpha/beta/delta subunits family. Component of the translation initiation factor 2B (eIF2B) complex which is a heterodecamer of two sets of five different subunits: alpha, beta, gamma, delta and epsilon. Subunits alpha, beta and delta comprise a regulatory subcomplex and subunits epsilon and gamma comprise a catalytic subcomplex. Within the complex, the hexameric regulatory complex resides at the center, with the two heterodimeric catalytic subcomplexes bound on opposite sides.

It localises to the cytoplasm. It is found in the cytosol. Activated by the chemical integrated stress response (ISR) inhibitor ISRIB which stimulates guanine nucleotide exchange factor activity for both phosphorylated and unphosphorylated eIF2. Functionally, acts as a component of the translation initiation factor 2B (eIF2B) complex, which catalyzes the exchange of GDP for GTP on eukaryotic initiation factor 2 (eIF2) gamma subunit. Its guanine nucleotide exchange factor activity is repressed when bound to eIF2 complex phosphorylated on the alpha subunit, thereby limiting the amount of methionyl-initiator methionine tRNA available to the ribosome and consequently global translation is repressed. The protein is Translation initiation factor eIF2B subunit alpha (EIF2B1) of Pongo abelii (Sumatran orangutan).